The primary structure comprises 426 residues: Glutamate-1-semialdehyde 2,1-aminomutase (426 aa).

Lys265 carries the N6-(pyridoxal phosphate)lysine modification.

It belongs to the class-III pyridoxal-phosphate-dependent aminotransferase family. HemL subfamily. Homodimer. It depends on pyridoxal 5'-phosphate as a cofactor.

Its subcellular location is the cytoplasm. The catalysed reaction is (S)-4-amino-5-oxopentanoate = 5-aminolevulinate. It functions in the pathway porphyrin-containing compound metabolism; protoporphyrin-IX biosynthesis; 5-aminolevulinate from L-glutamyl-tRNA(Glu): step 2/2. The polypeptide is Glutamate-1-semialdehyde 2,1-aminomutase (Salmonella choleraesuis (strain SC-B67)).